We begin with the raw amino-acid sequence, 366 residues long: Peptide chain release factor 2 (366 aa).

Gln251 is modified (N5-methylglutamine).

The protein belongs to the prokaryotic/mitochondrial release factor family. In terms of processing, methylated by PrmC. Methylation increases the termination efficiency of RF2.

The protein resides in the cytoplasm. Peptide chain release factor 2 directs the termination of translation in response to the peptide chain termination codons UGA and UAA. The polypeptide is Peptide chain release factor 2 (prfB) (Listeria monocytogenes serovar 1/2a (strain ATCC BAA-679 / EGD-e)).